The primary structure comprises 547 residues: Chaperonin GroEL 1 (547 aa).

ATP-binding positions include 30–33, Lys51, 87–91, Gly415, and Asp495; these read TLGP and DGTTT.

It belongs to the chaperonin (HSP60) family. In terms of assembly, forms a cylinder of 14 subunits composed of two heptameric rings stacked back-to-back. Interacts with the co-chaperonin GroES.

Its subcellular location is the cytoplasm. It catalyses the reaction ATP + H2O + a folded polypeptide = ADP + phosphate + an unfolded polypeptide.. Together with its co-chaperonin GroES, plays an essential role in assisting protein folding. The GroEL-GroES system forms a nano-cage that allows encapsulation of the non-native substrate proteins and provides a physical environment optimized to promote and accelerate protein folding. In Rhizobium johnstonii (strain DSM 114642 / LMG 32736 / 3841) (Rhizobium leguminosarum bv. viciae), this protein is Chaperonin GroEL 1.